We begin with the raw amino-acid sequence, 145 residues long: Deoxyuridine 5'-triphosphate nucleotidohydrolase (145 aa).

Substrate contacts are provided by residues Arg65–Gly67, Asn78, Thr82–Asp84, and Met92.

The protein belongs to the dUTPase family. Mg(2+) is required as a cofactor.

The catalysed reaction is dUTP + H2O = dUMP + diphosphate + H(+). Its pathway is pyrimidine metabolism; dUMP biosynthesis; dUMP from dCTP (dUTP route): step 2/2. Functionally, this enzyme is involved in nucleotide metabolism: it produces dUMP, the immediate precursor of thymidine nucleotides and it decreases the intracellular concentration of dUTP so that uracil cannot be incorporated into DNA. The chain is Deoxyuridine 5'-triphosphate nucleotidohydrolase from Chlorobium phaeobacteroides (strain BS1).